Reading from the N-terminus, the 360-residue chain is Blue-light-activated histidine kinase 1 (360 aa).

The PAS domain maps to 38–109 (LFLETTQQTR…KLREGIAAER (72 aa)). Cys85 is modified (S-4a-FMN cysteine). Residues 109 to 163 (RYTVVDLLNYRKDGIPFWNAVHVGPIYGEDGTLQYFYGSQWDITDIVAERRKAET) enclose the PAC domain. Phosphohistidine; by autocatalysis is present on His173. The HWE histidine kinase domain stretch occupies residues 260-303 (RSVTALGLALHELATNAVKYGALSVDAGRVEISWSREDGDVTLV).

FMN binds covalently to cysteine after exposure to blue light and this bond is spontaneously broken in the dark.

The enzyme catalyses ATP + protein L-histidine = ADP + protein N-phospho-L-histidine.. Photosensitive kinase that is involved in increased bacterial virulence upon exposure to light. The chain is Blue-light-activated histidine kinase 1 from Erythrobacter litoralis (strain HTCC2594).